The chain runs to 2999 residues: TPR and ankyrin repeat-containing protein 1 (2999 aa).

Residues 1 to 87 are disordered; it reads MASTTAGRRW…QPRGSTDSAC (87 aa). The segment covering 19-36 has biased composition (low complexity); sequence RGPTPRSRAPGAKLSAPE. TPR repeat units follow at residues 144–177 and 179–211; these read AMLL…DPTY and KGYY…LQRS. 6 ANK repeats span residues 297-327, 328-361, 369-405, 538-567, 572-593, and 621-654; these read EKYV…NIET, IGPN…EWKE, AGCT…DPTL, SQDR…DPRS, EGDT…DIGF, and NGNT…NFNL. Disordered stretches follow at residues 684 to 722, 773 to 831, 1151 to 1211, and 1318 to 1344; these read RRKN…LPCG, MPLP…GASQ, LEVE…GCVP, and WEED…QTGD. Composition is skewed to polar residues over residues 699-717 and 801-815; these read SRSS…TSFK and TQRM…NNPV. Basic and acidic residues predominate over residues 1151-1164; the sequence is LEVEPGKEGPGREE. Over residues 1318 to 1327 the composition is skewed to acidic residues; it reads WEEDDEEVEA. TPR repeat units follow at residues 1772 to 1805 and 1866 to 1899; these read PYEW…EKEK and LGKI…DLAL.

In terms of tissue distribution, expressed only in the brain. Detected in the hippocampus, hypothalamus and cingulate gyrus.

This is TPR and ankyrin repeat-containing protein 1 (Trank1) from Mus musculus (Mouse).